A 511-amino-acid chain; its full sequence is Cytochrome P450 monooxygenase roqR (511 aa).

The first 23 residues, 1 to 23 (MSGYVLLTVQLAAVLLLVTLWRA), serve as a signal peptide directing secretion. N-linked (GlcNAc...) asparagine glycans are attached at residues Asn-364, Asn-373, and Asn-383. Heme is bound at residue Cys-455.

Belongs to the cytochrome P450 family. Heme is required as a cofactor.

It participates in alkaloid biosynthesis. Its function is as follows. Cytochrome P450 monooxygenase; part of the gene cluster that mediates the biosynthesis of the mycotoxins roquefortine C and meleagrin. The first stage is catalyzed by the dipeptide synthase roqA which condenses histidine and tryptophan to produce histidyltryptophanyldiketopiperazine (HTD). HTD is then converted to roquefortine C through two possible pathways. In the first pathway, prenyltransferase roqD transforms HTD to the intermediate roquefortine D, which is in turn converted to roquefortine C by the cytochrome P450 monooxygenase roqR. In the second pathway, HTD is first converted to the intermediate dehydrohistidyltryptophanyldi-ketopiperazine (DHTD) by roqR which is then prenylated by roqD to form roquefortine C. Roquefortine C can be further transformed to meleagrin via three more reactions including oxydation to glandicolin A by roqM, which is further reduced to glandicoline B by roqO. Finally, glandicoline B is converted to meleagrin by the glandicoline B O-methyltransferase roqN. More studies identified further branching and additional metabolites produced by the roquefortine/meleagrin cluster, including roquefortine F, roquefortine L, roquefortine M, roquefortine N and neoxaline. The polypeptide is Cytochrome P450 monooxygenase roqR (Penicillium rubens (strain ATCC 28089 / DSM 1075 / NRRL 1951 / Wisconsin 54-1255) (Penicillium chrysogenum)).